The following is a 252-amino-acid chain: MNLKVLVCVKQTFDTEAKIELKDGKIADAGINLIINPYDEVAVEGAIQLKEKGVAKEIVVVAAGSDKAMDAIRTALAMGADRGILVQQDTAADEFARAVALAEAIKGENPDIILAGHVAADDGSSQVPTRVAEILGLPHVNVITAVEIAGGKATCTSEADGGTQVTEVSLPAVISSQVSWNEPRYPSMKGIMAAKKKPVATAAAAAAESKVKILEFSLPPAKAAGIKIEDEPEVCATKLAEWMKNTVKVEVK.

It belongs to the ETF beta-subunit/FixA family. In terms of assembly, heterodimer of an alpha and a beta subunit. It depends on AMP as a cofactor.

It is found in the cytoplasm. It participates in lipid metabolism; butanoate metabolism. Part of an electron transfer flavoprotein involved in syntrophic growth of S.wolfei with butyrate. Probably receives electrons from butyryl-CoA dehydrogenases, and transfers them to the membrane-bound quinone oxidoreductase Swol_0698. The protein is Electron transfer flavoprotein subunit beta of Syntrophomonas wolfei subsp. wolfei (strain DSM 2245B / Goettingen).